The following is a 361-amino-acid chain: MMKTMRIAAIPGDGIGKEVLPEGIRVLQAAAERWGFALSFEQMEWASCEYYSHHGKMMPDDWHEQLSRFDAIYFGAVGWPDTVPDHISLWGSLLKFRREFDQYVNLRPVRLFPGVPCPLAGKQPGDIDFYVVRENTEGEYSSLGGRVNEGTEHEVVIQESVFTRRGVDRILRYAFELAQSRPRKTLTSATKSNGLAISMPYWDERVEAMAENYPEIRWDKQHIDILCARFVMQPERFDVVVASNLFGDILSDLGPACTGTIGIAPSANLNPERTFPSLFEPVHGSAPDIYGKNIANPIATIWAGAMMLDFLGNGDERFQQAHNGILAAIEEVIAHGPKTPDMKGNATTPQVADAICKIILR.

Residues aspartate 224, aspartate 248, and aspartate 252 each contribute to the Mn(2+) site.

It belongs to the isocitrate and isopropylmalate dehydrogenases family. It depends on Mg(2+) as a cofactor. Requires Mn(2+) as cofactor.

Its subcellular location is the cytoplasm. It catalyses the reaction (R)-malate + NAD(+) = pyruvate + CO2 + NADH. Functionally, catalyzes the NAD(+)-dependent oxidative decarboxylation of D-malate into pyruvate. Is essential for aerobic growth on D-malate as the sole carbon source. But is not required for anaerobic D-malate utilization, although DmlA is expressed and active in those conditions. Appears to be not able to use L-tartrate as a substrate for dehydrogenation instead of D-malate. The chain is D-malate dehydrogenase [decarboxylating] (dmlA) from Escherichia coli (strain K12).